The primary structure comprises 968 residues: Translation initiation factor IF-2 (968 aa).

Low complexity predominate over residues 305-319 (KPAAAAGAPGAPGAA). The interval 305 to 376 (KPAAAAGAPG…NDRDARPEST (72 aa)) is disordered. The 168-residue stretch at 468 to 635 (PRAPVVTVMG…QVLLQAEVLE (168 aa)) folds into the tr-type G domain. The G1 stretch occupies residues 477 to 484 (GHVDHGKT). Residue 477 to 484 (GHVDHGKT) coordinates GTP. Residues 502–506 (GITQH) are G2. A G3 region spans residues 523–526 (DTPG). GTP is bound by residues 523-527 (DTPGH) and 577-580 (NKID). The interval 577–580 (NKID) is G4. The G5 stretch occupies residues 613 to 615 (SAR).

The protein belongs to the TRAFAC class translation factor GTPase superfamily. Classic translation factor GTPase family. IF-2 subfamily.

It is found in the cytoplasm. Functionally, one of the essential components for the initiation of protein synthesis. Protects formylmethionyl-tRNA from spontaneous hydrolysis and promotes its binding to the 30S ribosomal subunits. Also involved in the hydrolysis of GTP during the formation of the 70S ribosomal complex. The polypeptide is Translation initiation factor IF-2 (Polaromonas sp. (strain JS666 / ATCC BAA-500)).